A 167-amino-acid chain; its full sequence is Mannose-specific lectin (167 aa).

Residues 1–24 (MAFSISSTMIFLLSLALFSTLVSA) form the signal peptide. The Bulb-type lectin domain occupies 25-138 (DNHLLPGERL…PIFATGTNRF (114 aa)). Residues C53 and C76 are joined by a disulfide bond.

As to quaternary structure, homotetramer. In terms of tissue distribution, expressed in the pseudobulb, with highest levels of expression in the non-swollen internode (at protein level).

It is found in the secreted. Mannose-specific lectin. Shows agglutinating activity towards chicken erythrocytes. Has antifungal activity against A.alternata and Collectotrichum species. In Dendrobium findlayanum (Findlay's orchid), this protein is Mannose-specific lectin.